We begin with the raw amino-acid sequence, 159 residues long: Putative 4-hydroxy-4-methyl-2-oxoglutarate aldolase (159 aa).

Substrate is bound by residues 75–78 and Arg97; that span reads GDQL. Asp98 is an a divalent metal cation binding site.

It belongs to the class II aldolase/RraA-like family. As to quaternary structure, homotrimer. Requires a divalent metal cation as cofactor.

The catalysed reaction is 4-hydroxy-4-methyl-2-oxoglutarate = 2 pyruvate. The enzyme catalyses oxaloacetate + H(+) = pyruvate + CO2. Its function is as follows. Catalyzes the aldol cleavage of 4-hydroxy-4-methyl-2-oxoglutarate (HMG) into 2 molecules of pyruvate. Also contains a secondary oxaloacetate (OAA) decarboxylase activity due to the common pyruvate enolate transition state formed following C-C bond cleavage in the retro-aldol and decarboxylation reactions. The chain is Putative 4-hydroxy-4-methyl-2-oxoglutarate aldolase from Aromatoleum aromaticum (strain DSM 19018 / LMG 30748 / EbN1) (Azoarcus sp. (strain EbN1)).